Consider the following 844-residue polypeptide: Beta-mannosidase B (844 aa).

The active-site Proton donor is Glu432.

The protein belongs to the glycosyl hydrolase 2 family. Beta-mannosidase B subfamily.

It catalyses the reaction Hydrolysis of terminal, non-reducing beta-D-mannose residues in beta-D-mannosides.. It functions in the pathway glycan metabolism; N-glycan degradation. In terms of biological role, exoglycosidase that cleaves the single beta-linked mannose residue from the non-reducing end of beta-mannosidic oligosaccharides of various complexity and length. Prefers mannobiose over mannotriose and has no activity against polymeric mannan. Is also severely restricted by galactosyl substitutions at the +1 subsite. The sequence is that of Beta-mannosidase B (mndB) from Aspergillus oryzae (strain ATCC 42149 / RIB 40) (Yellow koji mold).